We begin with the raw amino-acid sequence, 3092 residues long: Probable polyketide synthase 45 (3092 aa).

The Ketosynthase family 3 (KS3) domain occupies 10 to 430; sequence DNDVAIIGIG…GSNVCLILTE (421 aa). Catalysis depends on for beta-ketoacyl synthase activity residues Cys170, His315, and His353. Residues 640 to 673 are acyl/malonyl transferase; the sequence is GILASISIGHSLGEVSSAVCSGMIDLETGCFIIY. Ser650 (for acyl/malonyl transferase activity) is an active-site residue. Residues 967–1087 form an N-terminal hotdog fold region; the sequence is INQLGNRNER…GKFSITKHND (121 aa). The 288-residue stretch at 967-1254 folds into the PKS/mFAS DH domain; the sequence is INQLGNRNER…YTQLTPYKNQ (288 aa). His999 (proton acceptor; for dehydratase activity) is an active-site residue. The segment at 1103-1254 is C-terminal hotdog fold; that stretch reads NFVTIQKKEL…YTQLTPYKNQ (152 aa). Asp1165 (proton donor; for dehydratase activity) is an active-site residue. One can recognise a Carrier domain in the interval 2566 to 2644; it reads SDDLSIREEI…QLIQSVTDAM (79 aa). Ser2604 bears the O-(pantetheine 4'-phosphoryl)serine mark. The helical transmembrane segment at 2705 to 2725 threads the bilayer; the sequence is NTVFLTGSSGFIGIYILFYLI.

Requires pantetheine 4'-phosphate as cofactor.

It is found in the membrane. In terms of biological role, probable polyketide synthase. This is Probable polyketide synthase 45 (pks45) from Dictyostelium discoideum (Social amoeba).